The following is a 290-amino-acid chain: S-adenosylmethionine-dependent nucleotide dehydratase (290 aa).

One can recognise a Radical SAM core domain in the interval 6–226 (SGNNIIPSVN…VNRHSKNKFL (221 aa)). 3 residues coordinate [4Fe-4S] cluster: cysteine 22, cysteine 26, and cysteine 29.

This sequence belongs to the radical SAM superfamily. Viperin family. Requires [4Fe-4S] cluster as cofactor.

It carries out the reaction UTP + AH2 + S-adenosyl-L-methionine = 3'-deoxy-3',4'-didehydro-UTP + 5'-deoxyadenosine + L-methionine + A + H2O + H(+). In terms of biological role, expression of pVip47 in E.coli (strain MG1655) confers resistance to phage P1; has no effect against T7. Catalyzes the conversion of uridine triphosphate (UTP) to 3'-deoxy-3',4'-didehydro-UTP (ddhUTP), probably via a SAM-dependent radical mechanism. The modified nucleotide represses transcription from T7 RNA polymerase-directed genes (possibly by acting as chain terminators), strongly suggesting these nucleotides block viral polymerase transcription. How this protein allows bacteria to resist viruses that do not encode their own RNA polymerase (such as lambda, P1) is unknown. This Flammeovirga pacifica protein is S-adenosylmethionine-dependent nucleotide dehydratase.